The primary structure comprises 614 residues: Chaperone protein DnaK (614 aa).

A Phosphothreonine; by autocatalysis modification is found at Thr174. A disordered region spans residues 576-614 (QTGGAAPGPDMGADPGAGGAQGDDNVVDAEYTEVDKDQK). Residues 578–589 (GGAAPGPDMGAD) are compositionally biased toward low complexity.

It belongs to the heat shock protein 70 family.

Its function is as follows. Acts as a chaperone. The protein is Chaperone protein DnaK of Desulfitobacterium hafniense (strain DSM 10664 / DCB-2).